A 1033-amino-acid chain; its full sequence is Phospholipid-transporting ATPase neo1 (1033 aa).

4 consecutive transmembrane segments (helical) span residues 133–153, 274–294, 317–337, and 344–364; these read LKIG…LITL, TLWA…VYTG, INFY…GLTF, and DWYI…PINL. Asp-408 serves as the catalytic 4-aspartylphosphate intermediate. 15 residues coordinate ATP: Asp-408, Lys-409, Thr-410, Glu-491, Phe-528, Ser-530, Lys-533, Lys-551, Arg-580, Thr-581, Thr-662, Gly-663, Asp-664, Arg-744, and Lys-750. Asp-408 serves as a coordination point for Mg(2+). Thr-410 contributes to the Mg(2+) binding site. A run of 6 helical transmembrane segments spans residues 768–788, 843–863, 913–933, 939–959, 965–985, and 992–1012; these read IGDG…IGIV, VVYS…LLLV, VLIS…LIGF, MLAV…ALQI, TIVM…PFLT, and FLLG…SLLP. A Mg(2+)-binding site is contributed by Asp-770. Asn-773 and Asp-774 together coordinate ATP. A Mg(2+)-binding site is contributed by Asp-774.

This sequence belongs to the cation transport ATPase (P-type) (TC 3.A.3) family. Type IV subfamily. In terms of assembly, functions without a CDC50/LEM3 family accessory subunit. Mg(2+) is required as a cofactor.

Its subcellular location is the endosome membrane. The protein resides in the golgi apparatus membrane. It catalyses the reaction ATP + H2O + phospholipidSide 1 = ADP + phosphate + phospholipidSide 2.. The catalysed reaction is a 1,2-diacyl-sn-glycero-3-phospho-L-serine(out) + ATP + H2O = a 1,2-diacyl-sn-glycero-3-phospho-L-serine(in) + ADP + phosphate + H(+). The enzyme catalyses a 1,2-diacyl-sn-glycero-3-phosphoethanolamine(out) + ATP + H2O = a 1,2-diacyl-sn-glycero-3-phosphoethanolamine(in) + ADP + phosphate + H(+). Its function is as follows. Flippase that catalyzes the hydrolysis of ATP coupled to the transport of lysophosphatidylserine, phosphatidylethanolamine, and phosphatidylserine from the lumenal to the cytosolic leaflet of the Golgi apparatus membrane and ensures the maintenance of asymmetric distribution of phospholipids. The chain is Phospholipid-transporting ATPase neo1 from Schizosaccharomyces pombe (strain 972 / ATCC 24843) (Fission yeast).